We begin with the raw amino-acid sequence, 200 residues long: Large ribosomal subunit protein uL4 (200 aa).

Residues 42–65 (TRAQKTRSEVSGGGAKPWRQKGTG) form a disordered region.

Belongs to the universal ribosomal protein uL4 family. As to quaternary structure, part of the 50S ribosomal subunit.

Its function is as follows. One of the primary rRNA binding proteins, this protein initially binds near the 5'-end of the 23S rRNA. It is important during the early stages of 50S assembly. It makes multiple contacts with different domains of the 23S rRNA in the assembled 50S subunit and ribosome. In terms of biological role, forms part of the polypeptide exit tunnel. This Vibrio cholerae serotype O1 (strain ATCC 39541 / Classical Ogawa 395 / O395) protein is Large ribosomal subunit protein uL4.